The sequence spans 414 residues: Dimethylsulfoniopropionate lyase DddY (414 aa).

An N-terminal signal peptide occupies residues 1-18; that stretch reads MKYMVLFSGLLFSNVLVA.

Belongs to the DMSP lyase DddY family.

It localises to the periplasm. It catalyses the reaction S,S-dimethyl-beta-propiothetin = acrylate + dimethyl sulfide + H(+). In terms of biological role, catalyzes the cleavage of dimethylsulfoniopropionate (DMSP) into dimethyl sulfide (DMS) and acrylate. The polypeptide is Dimethylsulfoniopropionate lyase DddY (Shewanella woodyi (strain ATCC 51908 / MS32)).